A 404-amino-acid polypeptide reads, in one-letter code: Formate-dependent phosphoribosylglycinamide formyltransferase (404 aa).

N(1)-(5-phospho-beta-D-ribosyl)glycinamide contacts are provided by residues 25 to 26 (EL) and Glu85. Residues Arg118, Lys159, 164–169 (SSGKGQ), 199–202 (EGFV), and Glu207 each bind ATP. The 196-residue stretch at 123-318 (RLAAEELGLP…EFELHARAIL (196 aa)) folds into the ATP-grasp domain. Residues Glu277 and Glu289 each coordinate Mg(2+). N(1)-(5-phospho-beta-D-ribosyl)glycinamide-binding positions include Asp296, Lys365, and 372–373 (RR).

It belongs to the PurK/PurT family. As to quaternary structure, homodimer.

The catalysed reaction is N(1)-(5-phospho-beta-D-ribosyl)glycinamide + formate + ATP = N(2)-formyl-N(1)-(5-phospho-beta-D-ribosyl)glycinamide + ADP + phosphate + H(+). The protein operates within purine metabolism; IMP biosynthesis via de novo pathway; N(2)-formyl-N(1)-(5-phospho-D-ribosyl)glycinamide from N(1)-(5-phospho-D-ribosyl)glycinamide (formate route): step 1/1. Functionally, involved in the de novo purine biosynthesis. Catalyzes the transfer of formate to 5-phospho-ribosyl-glycinamide (GAR), producing 5-phospho-ribosyl-N-formylglycinamide (FGAR). Formate is provided by PurU via hydrolysis of 10-formyl-tetrahydrofolate. This Burkholderia thailandensis (strain ATCC 700388 / DSM 13276 / CCUG 48851 / CIP 106301 / E264) protein is Formate-dependent phosphoribosylglycinamide formyltransferase.